The following is a 1085-amino-acid chain: Protein CROWDED NUCLEI 3 (1085 aa).

Coiled coils occupy residues 51–149 (DEAS…NDLK) and 185–695 (RERA…LDVL). K318 is covalently cross-linked (Glycyl lysine isopeptide (Lys-Gly) (interchain with G-Cter in ubiquitin)). A Nuclear localization signal motif is present at residues 404–411 (AKREAALE). A Glycyl lysine isopeptide (Lys-Gly) (interchain with G-Cter in ubiquitin) cross-link involves residue K661. A phosphoserine mark is found at S764, S787, S825, and S843. 2 disordered regions span residues 801-997 (TVKL…GKAE) and 1020-1077 (NNTG…SIGK). A compositionally biased stretch (basic and acidic residues) spans 813–825 (SLDRVSGEDHEPS). Residues 854-868 (RRGRGRGRGRGKSVR) show a composition bias toward basic residues. The span at 877–897 (VSRDSKPSDGETPRKRQREQT) shows a compositional bias: basic and acidic residues. S910 is modified (phosphoserine). The segment covering 932–941 (VSQTPGQTRY) has biased composition (polar residues). The segment covering 949-995 (VGTEEDKAQASKGATEKQERVNDDIRKVPSPKETRTPPEGENRENGK) has biased composition (basic and acidic residues). The span at 1045–1066 (EEDDENISMIEEENEGEEEEET) shows a compositional bias: acidic residues.

Belongs to the CRWN family. In terms of assembly, core component of the LINC complex which is composed of inner nuclear membrane SUN domain-containing proteins coupled to outer nuclear membrane WIP proteins, the nucleoskeletal CRWN/LINC proteins, and, possibly, KAKU4. In terms of tissue distribution, expressed at low levels in roots, leaves, flowers and flower stalks.

It is found in the nucleus membrane. The protein localises to the nucleus. The protein resides in the nucleoplasm. Its subcellular location is the cytoplasm. It localises to the nucleus lamina. Functionally, component of SUN-protein-containing multivariate complexes also called LINC complexes which link the nucleoskeleton and cytoskeleton by providing versatile outer nuclear membrane attachment sites for cytoskeletal filaments. Required for nucleus structure organization (e.g. size and shape). The protein is Protein CROWDED NUCLEI 3 of Arabidopsis thaliana (Mouse-ear cress).